Here is a 334-residue protein sequence, read N- to C-terminus: Probable tRNA pseudouridine synthase B (334 aa).

Asp-82 functions as the Nucleophile in the catalytic mechanism. The PUA domain maps to 250–325 (LPKIWIKDSA…IAVDVEKVFM (76 aa)).

It belongs to the pseudouridine synthase TruB family. Type 2 subfamily.

It carries out the reaction uridine(55) in tRNA = pseudouridine(55) in tRNA. Could be responsible for synthesis of pseudouridine from uracil-55 in the psi GC loop of transfer RNAs. The polypeptide is Probable tRNA pseudouridine synthase B (Pyrococcus abyssi (strain GE5 / Orsay)).